The primary structure comprises 111 residues: MVFMDDLEEIRRRKLMELQRQKELEELQKEEMRRQVEAQKKAILRAILEPEAKERLSRLKLAHPEIAEAVENQLIYLAQAGRIQSKITDKMLVEILKRVQPKKRETRIIRK.

This sequence belongs to the PDCD5 family.

The sequence is that of DNA-binding protein AF_2068 from Archaeoglobus fulgidus (strain ATCC 49558 / DSM 4304 / JCM 9628 / NBRC 100126 / VC-16).